A 308-amino-acid polypeptide reads, in one-letter code: 11-beta-hydroxysteroid dehydrogenase-like 2 (308 aa).

A helical; Signal-anchor for type II membrane protein membrane pass occupies residues 10–30; it reads FLLPPLTISFLVLFYPFYLFT. NADP(+)-binding positions include 53–79 and Asp104; that span reads GASSGIGEHVAYEYAKKGAKLALVARR. Ser183 contributes to the substrate binding site. The active-site Proton acceptor is the Tyr196. Residues 196-200 and Lys200 each bind NADP(+); that span reads YSASK.

It belongs to the short-chain dehydrogenases/reductases (SDR) family.

It localises to the membrane. The polypeptide is 11-beta-hydroxysteroid dehydrogenase-like 2 (HSD2) (Arabidopsis thaliana (Mouse-ear cress)).